The chain runs to 327 residues: Serine/threonine-protein phosphatase PP2A catalytic subunit (327 aa).

4 residues coordinate Mn(2+): Asp-75, His-77, Asp-103, and Asn-135. The Proton donor role is filled by His-136. Positions 185 and 259 each coordinate Mn(2+). Position 327 is a leucine methyl ester (Leu-327).

This sequence belongs to the PPP phosphatase family. PP-2A subfamily. The cofactor is Mn(2+).

The enzyme catalyses O-phospho-L-seryl-[protein] + H2O = L-seryl-[protein] + phosphate. It catalyses the reaction O-phospho-L-threonyl-[protein] + H2O = L-threonyl-[protein] + phosphate. This is Serine/threonine-protein phosphatase PP2A catalytic subunit (pph-1) from Neurospora crassa (strain ATCC 24698 / 74-OR23-1A / CBS 708.71 / DSM 1257 / FGSC 987).